The following is a 143-amino-acid chain: Large ribosomal subunit protein uL16 (143 aa).

Belongs to the universal ribosomal protein uL16 family. As to quaternary structure, part of the 50S ribosomal subunit.

Binds 23S rRNA and is also seen to make contacts with the A and possibly P site tRNAs. In Tropheryma whipplei (strain TW08/27) (Whipple's bacillus), this protein is Large ribosomal subunit protein uL16.